We begin with the raw amino-acid sequence, 173 residues long: Adenine phosphoribosyltransferase (173 aa).

This sequence belongs to the purine/pyrimidine phosphoribosyltransferase family. Homodimer.

Its subcellular location is the cytoplasm. It carries out the reaction AMP + diphosphate = 5-phospho-alpha-D-ribose 1-diphosphate + adenine. Its pathway is purine metabolism; AMP biosynthesis via salvage pathway; AMP from adenine: step 1/1. Functionally, catalyzes a salvage reaction resulting in the formation of AMP, that is energically less costly than de novo synthesis. The protein is Adenine phosphoribosyltransferase of Solibacter usitatus (strain Ellin6076).